We begin with the raw amino-acid sequence, 287 residues long: Glycine--tRNA ligase alpha subunit (287 aa).

This sequence belongs to the class-II aminoacyl-tRNA synthetase family. In terms of assembly, tetramer of two alpha and two beta subunits.

It is found in the cytoplasm. The catalysed reaction is tRNA(Gly) + glycine + ATP = glycyl-tRNA(Gly) + AMP + diphosphate. The sequence is that of Glycine--tRNA ligase alpha subunit from Campylobacter jejuni (strain RM1221).